The primary structure comprises 99 residues: Nucleoid-associated protein LCABL_24440 (99 aa).

It belongs to the YbaB/EbfC family. Homodimer.

The protein resides in the cytoplasm. It is found in the nucleoid. In terms of biological role, binds to DNA and alters its conformation. May be involved in regulation of gene expression, nucleoid organization and DNA protection. This chain is Nucleoid-associated protein LCABL_24440, found in Lacticaseibacillus casei (strain BL23) (Lactobacillus casei).